We begin with the raw amino-acid sequence, 107 residues long: U1-lycotoxin-Ls1b (107 aa).

The N-terminal stretch at 1–20 is a signal peptide; that stretch reads MMKVLVVFALLVTLISYSSS. A propeptide spanning residues 21 to 41 is cleaved from the precursor; it reads EGIDDLEADELLSLMANEQTR. Disulfide bonds link cysteine 44–cysteine 59, cysteine 51–cysteine 68, cysteine 58–cysteine 86, and cysteine 70–cysteine 84.

The protein belongs to the neurotoxin 19 (CSTX) family. 04 (U1-Lctx) subfamily. In terms of tissue distribution, expressed by the venom gland.

Its subcellular location is the secreted. The chain is U1-lycotoxin-Ls1b from Lycosa singoriensis (Wolf spider).